Consider the following 687-residue polypeptide: TWiK family of potassium channels protein 12 (687 aa).

Topologically, residues 1–21 (MTLFQKLQWFCQLIRLRAYYK) are cytoplasmic. A helical membrane pass occupies residues 22 to 42 (FLLLIAYTLFGAWLFRFYELQ). 3 N-linked (GlcNAc...) asparagine glycosylation sites follow: asparagine 53, asparagine 77, and asparagine 98. Residues 112-132 (WTWTGAMFYAGQLYTTIGYGY) constitute an intramembrane region (pore-forming). The chain crosses the membrane as a helical span at residues 142-162 (ICTVLYALFGIPCFLMYLKAI). Residues 163 to 212 (GKTLSKRLKKIYKRVRRSAFGKFLLPTRVTATKDGFEDPDASAEERKRKP) lie on the Cytoplasmic side of the membrane. The chain crosses the membrane as a helical span at residues 213–233 (FPIPIAIILLIIWICFSASMF). Positions 242–262 (FPSAVYFFIVSISTVGLGDML) form an intramembrane region, pore-forming. A helical membrane pass occupies residues 270-290 (VFNFLLILFGLALLSMCFELI). Residues 291 to 687 (TDRIAKWKQK…SKRDAPVNIV (397 aa)) lie on the Cytoplasmic side of the membrane. The interval 661–687 (SPSTSTSTSMIDSGYDLSKRDAPVNIV) is disordered. Basic and acidic residues predominate over residues 677–687 (LSKRDAPVNIV).

This sequence belongs to the two pore domain potassium channel (TC 1.A.1.8) family.

It is found in the membrane. This is TWiK family of potassium channels protein 12 from Caenorhabditis briggsae.